Reading from the N-terminus, the 275-residue chain is Exosome complex component Rrp42 (275 aa).

The protein belongs to the RNase PH family. Rrp42 subfamily. Component of the archaeal exosome complex. Forms a hexameric ring-like arrangement composed of 3 Rrp41-Rrp42 heterodimers. The hexameric ring associates with a trimer of Rrp4 and/or Csl4 subunits.

It is found in the cytoplasm. Non-catalytic component of the exosome, which is a complex involved in RNA degradation. Contributes to the structuring of the Rrp41 active site. The polypeptide is Exosome complex component Rrp42 (Saccharolobus solfataricus (strain ATCC 35092 / DSM 1617 / JCM 11322 / P2) (Sulfolobus solfataricus)).